The sequence spans 267 residues: 3-methyl-2-oxobutanoate hydroxymethyltransferase (267 aa).

Residues aspartate 46 and aspartate 85 each contribute to the Mg(2+) site. 3-methyl-2-oxobutanoate contacts are provided by residues aspartate 46–serine 47, aspartate 85, and lysine 115. Glutamate 117 serves as a coordination point for Mg(2+). Glutamate 184 (proton acceptor) is an active-site residue.

This sequence belongs to the PanB family. In terms of assembly, homodecamer; pentamer of dimers. Requires Mg(2+) as cofactor.

The protein localises to the cytoplasm. The enzyme catalyses 3-methyl-2-oxobutanoate + (6R)-5,10-methylene-5,6,7,8-tetrahydrofolate + H2O = 2-dehydropantoate + (6S)-5,6,7,8-tetrahydrofolate. The protein operates within cofactor biosynthesis; (R)-pantothenate biosynthesis; (R)-pantoate from 3-methyl-2-oxobutanoate: step 1/2. In terms of biological role, catalyzes the reversible reaction in which hydroxymethyl group from 5,10-methylenetetrahydrofolate is transferred onto alpha-ketoisovalerate to form ketopantoate. The polypeptide is 3-methyl-2-oxobutanoate hydroxymethyltransferase (Geobacter metallireducens (strain ATCC 53774 / DSM 7210 / GS-15)).